Reading from the N-terminus, the 515-residue chain is Maturase K (515 aa).

This sequence belongs to the intron maturase 2 family. MatK subfamily.

It is found in the plastid. The protein localises to the chloroplast. Usually encoded in the trnK tRNA gene intron. Probably assists in splicing its own and other chloroplast group II introns. This is Maturase K from Picea sitchensis (Sitka spruce).